A 760-amino-acid chain; its full sequence is Forkhead box protein M1 (760 aa).

Disordered stretches follow at residues 1-54 (MRTS…AESS) and 95-167 (GKES…SYAG). Composition is skewed to low complexity over residues 43–54 (PAQASQEVAESS) and 110–124 (SSGGPSSHPSQPQAH). The segment covering 125 to 134 (SSRDSKRAEV) has biased composition (basic and acidic residues). Over residues 140 to 149 (GPKPAAKGVP) the composition is skewed to low complexity. Glycyl lysine isopeptide (Lys-Gly) (interchain with G-Cter in SUMO2) cross-links involve residues Lys199 and Lys323. A DNA-binding region (fork-head) is located at residues 233–325 (ERPPYSYMAM…LTLDQVFKPL (93 aa)). A disordered region spans residues 323–348 (KPLEPGSPQSPEHLESQQKRPNPELH). The residue at position 329 (Ser329) is a Phosphoserine. Residues 334-348 (EHLESQQKRPNPELH) are compositionally biased toward basic and acidic residues. Lys354 is covalently cross-linked (Glycyl lysine isopeptide (Lys-Gly) (interchain with G-Cter in SUMO2)). Residue Ser374 is modified to Phosphoserine; by CHEK2. Residues Lys420 and Lys438 each participate in a glycyl lysine isopeptide (Lys-Gly) (interchain with G-Cter in SUMO2) cross-link. Disordered stretches follow at residues 500–560 (SWED…PDLF), 577–635 (ESSE…LDFS), and 660–709 (PLKS…IPSL). Ser521 carries the post-translational modification Phosphoserine. Over residues 531–542 (VTKRREKREVSR) the composition is skewed to basic and acidic residues. Positions 604-613 (PVSSTPSKSV) are enriched in polar residues. Thr608 is modified (phosphothreonine; by CDK1). Thr624 bears the Phosphothreonine mark. 2 positions are modified to phosphoserine; by PLK1: Ser727 and Ser736.

In terms of processing, phosphorylated in M (mitotic) phase. Phosphorylation by the checkpoint kinase CHEK2 in response to DNA damage increases the FOXM1 protein stability probably stimulating the transcription of genes involved in DNA repair. Phosphorylated by CDK1 in late S and G2 phases, creating docking sites for the POLO box domains of PLK1. Subsequently, PLK1 binds and phosphorylates FOXM1, leading to activation of transcriptional activity and subsequent enhanced expression of key mitotic regulators. Phosphorylated by GSK3B leading to ubiquitination and proteasomal degradation. Expressed in fetal heart, brain, liver, lung, kidney and limb, but only in adult thymus. Appears to be expressed only in adult organs containing proliferating/cycling cells or in response to growth factors.

The protein localises to the nucleus. Its function is as follows. Transcription factor regulating the expression of cell cycle genes essential for DNA replication and mitosis. Plays a role in the control of cell proliferation. Also plays a role in DNA break repair, participating in the DNA damage checkpoint response. Promotes transcription of PHB2. The protein is Forkhead box protein M1 (Foxm1) of Mus musculus (Mouse).